The sequence spans 353 residues: Photosystem II protein D1 (353 aa).

Position 2 is an N-acetylthreonine (threonine 2). Threonine 2 bears the Phosphothreonine mark. Transmembrane regions (helical) follow at residues tyrosine 29 to serine 46, histidine 118 to leucine 133, and tryptophan 142 to alanine 156. A chlorophyll a-binding site is contributed by histidine 118. Tyrosine 126 contributes to the pheophytin a binding site. [CaMn4O5] cluster-binding residues include aspartate 170 and glutamate 189. A helical membrane pass occupies residues phenylalanine 197–leucine 218. Position 198 (histidine 198) interacts with chlorophyll a. Residues histidine 215 and serine 264 to phenylalanine 265 each bind a quinone. A Fe cation-binding site is contributed by histidine 215. Histidine 272 contributes to the Fe cation binding site. Residues phenylalanine 274 to leucine 288 form a helical membrane-spanning segment. Positions 332, 333, 342, and 344 each coordinate [CaMn4O5] cluster. The propeptide occupies alanine 345 to glycine 353.

Belongs to the reaction center PufL/M/PsbA/D family. As to quaternary structure, PSII is composed of 1 copy each of membrane proteins PsbA, PsbB, PsbC, PsbD, PsbE, PsbF, PsbH, PsbI, PsbJ, PsbK, PsbL, PsbM, PsbT, PsbX, PsbY, PsbZ, Psb30/Ycf12, at least 3 peripheral proteins of the oxygen-evolving complex and a large number of cofactors. It forms dimeric complexes. The D1/D2 heterodimer binds P680, chlorophylls that are the primary electron donor of PSII, and subsequent electron acceptors. It shares a non-heme iron and each subunit binds pheophytin, quinone, additional chlorophylls, carotenoids and lipids. D1 provides most of the ligands for the Mn4-Ca-O5 cluster of the oxygen-evolving complex (OEC). There is also a Cl(-1) ion associated with D1 and D2, which is required for oxygen evolution. The PSII complex binds additional chlorophylls, carotenoids and specific lipids. serves as cofactor. In terms of processing, tyr-161 forms a radical intermediate that is referred to as redox-active TyrZ, YZ or Y-Z. C-terminally processed by CTPA; processing is essential to allow assembly of the oxygen-evolving complex and thus photosynthetic growth.

Its subcellular location is the plastid. It localises to the chloroplast thylakoid membrane. The catalysed reaction is 2 a plastoquinone + 4 hnu + 2 H2O = 2 a plastoquinol + O2. Photosystem II (PSII) is a light-driven water:plastoquinone oxidoreductase that uses light energy to abstract electrons from H(2)O, generating O(2) and a proton gradient subsequently used for ATP formation. It consists of a core antenna complex that captures photons, and an electron transfer chain that converts photonic excitation into a charge separation. The D1/D2 (PsbA/PsbD) reaction center heterodimer binds P680, the primary electron donor of PSII as well as several subsequent electron acceptors. This Nandina domestica (Heavenly bamboo) protein is Photosystem II protein D1.